Here is a 474-residue protein sequence, read N- to C-terminus: Glutamate--tRNA ligase (474 aa).

Positions 9–19 (PSPTGFLHVGG) match the 'HIGH' region motif. The 'KMSKS' region motif lies at 240–244 (KLSKR). Lysine 243 lines the ATP pocket.

Belongs to the class-I aminoacyl-tRNA synthetase family. Glutamate--tRNA ligase type 1 subfamily. As to quaternary structure, monomer.

It is found in the cytoplasm. It catalyses the reaction tRNA(Glu) + L-glutamate + ATP = L-glutamyl-tRNA(Glu) + AMP + diphosphate. Catalyzes the attachment of glutamate to tRNA(Glu) in a two-step reaction: glutamate is first activated by ATP to form Glu-AMP and then transferred to the acceptor end of tRNA(Glu). The protein is Glutamate--tRNA ligase of Photobacterium profundum (strain SS9).